The primary structure comprises 1350 residues: ABC transporter C family member 13 (1350 aa).

Residues 107–390 (NKKSIFIVIL…LPEAIHNLLG (284 aa)) form the ABC transmembrane type-1 1 domain. A run of 4 helical transmembrane segments spans residues 111–131 (IFIV…LKYF), 143–163 (TFLT…SYTL), 215–235 (IGLF…FPIQ), and 240–260 (LALL…VMII). Positions 462–481 (EKSEEEYETTTTTTDDNNNN) are disordered. Low complexity predominate over residues 470–481 (TTTTTTDDNNNN). Residues 473–693 (TTTDDNNNNN…IDFESIMKTK (221 aa)) form the ABC transporter 1 domain. 505–512 (GVVGSGKT) contributes to the ATP binding site. In terms of domain architecture, ABC transmembrane type-1 2 spans 774–1061 (KHGSSTFFFI…FVELEVKMNS (288 aa)). A run of 6 helical transmembrane segments spans residues 776–796 (GSST…QAIF), 816–836 (DSFY…TLVI), 887–907 (IDLL…TVVF), 909–929 (ICVM…LIIV), 1003–1023 (IGVR…FFSL), and 1029–1049 (GFSV…NWAV). Positions 1103–1337 (IEFRDVEIRY…KNSKFSKLVK (235 aa)) constitute an ABC transporter 2 domain. Position 1137–1144 (1137–1144 (GRTGAGKS)) interacts with ATP.

Belongs to the ABC transporter superfamily. ABCC family. Conjugate transporter (TC 3.A.1.208) subfamily.

The protein resides in the membrane. This Dictyostelium discoideum (Social amoeba) protein is ABC transporter C family member 13 (abcC13).